The following is a 461-amino-acid chain: ATP synthase subunit beta (461 aa).

151–158 (GGAGVGKT) provides a ligand contact to ATP.

This sequence belongs to the ATPase alpha/beta chains family. In terms of assembly, F-type ATPases have 2 components, CF(1) - the catalytic core - and CF(0) - the membrane proton channel. CF(1) has five subunits: alpha(3), beta(3), gamma(1), delta(1), epsilon(1). CF(0) has three main subunits: a(1), b(2) and c(9-12). The alpha and beta chains form an alternating ring which encloses part of the gamma chain. CF(1) is attached to CF(0) by a central stalk formed by the gamma and epsilon chains, while a peripheral stalk is formed by the delta and b chains.

It is found in the cell inner membrane. It carries out the reaction ATP + H2O + 4 H(+)(in) = ADP + phosphate + 5 H(+)(out). Produces ATP from ADP in the presence of a proton gradient across the membrane. The catalytic sites are hosted primarily by the beta subunits. In Alteromonas mediterranea (strain DSM 17117 / CIP 110805 / LMG 28347 / Deep ecotype), this protein is ATP synthase subunit beta.